The following is a 400-amino-acid chain: Elongation factor Tu (400 aa).

A tr-type G domain is found at 10 to 209 (KPHVNVGTIG…AVDSYIPTPE (200 aa)). A G1 region spans residues 19 to 26 (GHVDHGKT). Position 19-26 (19-26 (GHVDHGKT)) interacts with GTP. Threonine 26 contributes to the Mg(2+) binding site. Residues 60-64 (GITIA) are G2. The tract at residues 81-84 (DCPG) is G3. Residues 81 to 85 (DCPGH) and 136 to 139 (NKVD) each bind GTP. The tract at residues 136 to 139 (NKVD) is G4. Positions 174-176 (SAL) are G5.

It belongs to the TRAFAC class translation factor GTPase superfamily. Classic translation factor GTPase family. EF-Tu/EF-1A subfamily. Monomer.

Its subcellular location is the cytoplasm. It carries out the reaction GTP + H2O = GDP + phosphate + H(+). GTP hydrolase that promotes the GTP-dependent binding of aminoacyl-tRNA to the A-site of ribosomes during protein biosynthesis. The sequence is that of Elongation factor Tu from Moorella thermoacetica (strain ATCC 39073 / JCM 9320).